The primary structure comprises 612 residues: MAGGIVSPASLLDLIADIVEIPLNTGMFKKDCADLTRRVCLLTHLLEEIRDSTPIDSAASSSSENDWWSDLVVGLQAAKRLLSTARFQARDSSDGAAKRISFQFQCVTWKLEKALSNLPYDLYDISDEVGEQVELARSQLRRAMQRYGSLNSNKFSSALSEPMERDGFSNVIKIKAEEKLESVSETLHFGEEEEKQSSPPLRRSSSISLAYYLSKDADTDRLDKMVNKNTDESKKSDKLTIPVDFLCPVSLELMKDPVIVATGQTYERAYIQRWIDCGNLTCPKTQQKLENFTLTPNYVLRSLISRWCAEHNIEQPAGYINGRTKNSGDMSVIRALVQRLSSRSTEDRRNAVSEIRSLSKRSTDNRILIAEAGAIPVLVNLLTSEDVATQENAITCVLNLSIYENNKELIMFAGAVTSIVQVLRAGTMEARENAAATLFSLSLADENKIIIGGSGAIPALVDLLENGTPRGKKDAATALFNLCIYHGNKGRAVRAGIVTALVKMLSDSTRHRMVDEALTILSVLANNQDAKSAIVKANTLPALIGILQTDQTRNRENAAAILLSLCKRDTEKLITIGRLGAVVPLMDLSKNGTERGKRKAISLLELLRKACQ.

Residues 127–196 (DEVGEQVELA…LHFGEEEEKQ (70 aa)) are a coiled coil. One can recognise a U-box domain in the interval 240–314 (TIPVDFLCPV…SRWCAEHNIE (75 aa)). ARM repeat units lie at residues 363–402 (TDNR…NLSI), 404–443 (ENNK…SLSL), 445–484 (DENK…NLCI), 486–526 (HGNK…VLAN), and 528–567 (QDAK…SLCK).

The catalysed reaction is S-ubiquitinyl-[E2 ubiquitin-conjugating enzyme]-L-cysteine + [acceptor protein]-L-lysine = [E2 ubiquitin-conjugating enzyme]-L-cysteine + N(6)-ubiquitinyl-[acceptor protein]-L-lysine.. It participates in protein modification; protein ubiquitination. In terms of biological role, functions as an E3 ubiquitin ligase. The sequence is that of U-box domain-containing protein 11 (PUB11) from Arabidopsis thaliana (Mouse-ear cress).